Here is a 208-residue protein sequence, read N- to C-terminus: uncharacterized protein (208 aa).

4Fe-4S ferredoxin-type domains are found at residues 59–88 (GVLV…SVGT), 114–145 (GDLN…WQQK), 147–176 (GCIT…VNTE), and 174–203 (NTES…IIEW). Cysteine 68, cysteine 71, cysteine 74, cysteine 78, cysteine 123, cysteine 126, cysteine 131, cysteine 135, cysteine 156, cysteine 159, cysteine 162, cysteine 166, cysteine 183, cysteine 186, cysteine 189, and cysteine 193 together coordinate [4Fe-4S] cluster.

This is an uncharacterized protein from Escherichia coli O157:H7.